Consider the following 681-residue polypeptide: DNA ligase (681 aa).

Residues 33–37, 83–84, and Glu-113 contribute to the NAD(+) site; these read DGQFD and SL. Residue Lys-115 is the N6-AMP-lysine intermediate of the active site. NAD(+)-binding residues include Arg-136, Glu-176, Lys-292, and Lys-316. Zn(2+) is bound by residues Cys-410, Cys-413, Cys-429, and Cys-435. The BRCT domain occupies 599–681; the sequence is SIPRNLEGLS…RALLADGPPA (83 aa).

This sequence belongs to the NAD-dependent DNA ligase family. LigA subfamily. It depends on Mg(2+) as a cofactor. Requires Mn(2+) as cofactor.

It carries out the reaction NAD(+) + (deoxyribonucleotide)n-3'-hydroxyl + 5'-phospho-(deoxyribonucleotide)m = (deoxyribonucleotide)n+m + AMP + beta-nicotinamide D-nucleotide.. DNA ligase that catalyzes the formation of phosphodiester linkages between 5'-phosphoryl and 3'-hydroxyl groups in double-stranded DNA using NAD as a coenzyme and as the energy source for the reaction. It is essential for DNA replication and repair of damaged DNA. The chain is DNA ligase from Mycobacteroides abscessus (strain ATCC 19977 / DSM 44196 / CCUG 20993 / CIP 104536 / JCM 13569 / NCTC 13031 / TMC 1543 / L948) (Mycobacterium abscessus).